Here is a 323-residue protein sequence, read N- to C-terminus: Annexin A3 (323 aa).

The residue at position 2 (Ala2) is an N-acetylalanine. 4 Annexin repeats span residues 18–89 (FSPS…ALVT), 90–161 (APAL…TLAD), 173–245 (HLAK…AIVH), and 249–320 (NTPA…KICG). Position 177 is an N6-acetyllysine (Lys177). A Phosphothreonine modification is found at Thr267.

The protein belongs to the annexin family.

Inhibitor of phospholipase A2, also possesses anti-coagulant properties. The polypeptide is Annexin A3 (Anxa3) (Mus musculus (Mouse)).